The sequence spans 322 residues: uncharacterized protein (322 aa).

The disordered stretch occupies residues 1–63 (MFKIRKRSVP…DEASSSDSHY (63 aa)). Over residues 34–49 (FVDDHGKPIAEYRDFP) the composition is skewed to basic and acidic residues. The C3H1-type zinc-finger motif lies at 245–274 (WKVDRICTYYINRPDKCTRGDNCRFKHDDV). A disordered region spans residues 278 to 322 (HRQKEIQSSRNQSWHHRTSSHKYSSENSDHRGYRRHRSRSPHARQ). Residues 309-322 (GYRRHRSRSPHARQ) are compositionally biased toward basic residues.

This is an uncharacterized protein from Caenorhabditis elegans.